The sequence spans 360 residues: Peptide chain release factor 1 (360 aa).

Residue Q235 is modified to N5-methylglutamine.

This sequence belongs to the prokaryotic/mitochondrial release factor family. In terms of processing, methylated by PrmC. Methylation increases the termination efficiency of RF1.

Its subcellular location is the cytoplasm. Its function is as follows. Peptide chain release factor 1 directs the termination of translation in response to the peptide chain termination codons UAG and UAA. This is Peptide chain release factor 1 from Paraburkholderia phymatum (strain DSM 17167 / CIP 108236 / LMG 21445 / STM815) (Burkholderia phymatum).